We begin with the raw amino-acid sequence, 208 residues long: Outer-membrane lipoprotein carrier protein (208 aa).

The N-terminal stretch at 1–22 (MKKIFTIAALSLPLFCHLPAMA) is a signal peptide.

This sequence belongs to the LolA family. In terms of assembly, monomer.

It localises to the periplasm. Functionally, participates in the translocation of lipoproteins from the inner membrane to the outer membrane. Only forms a complex with a lipoprotein if the residue after the N-terminal Cys is not an aspartate (The Asp acts as a targeting signal to indicate that the lipoprotein should stay in the inner membrane). In Shewanella pealeana (strain ATCC 700345 / ANG-SQ1), this protein is Outer-membrane lipoprotein carrier protein.